A 463-amino-acid polypeptide reads, in one-letter code: MSDQSNQKELLWQSRFSEPFDREALKFSSSVHVDGLLYREDIQGSIAHATMLGEQGIISKEEAGQIVTGLKAVEKEIESGELTPVWEDEDIHTVIENRLKELIGPTAGKLHSGRSRNDQVATDTRLYLRRNIDRIGELLKAMQSTLLDKAEQYKHTIMFGYTHLQRAQPISAGHYYMAWHSMFGRDAQRLADLRKRANISPLGAAAFAGSTLPLDPARSAELLEFDGVFTNSIDAVSDRDLVIEFVSACSMIMMHLSRFSEDVILWSSAEFNYLSISDAFATGSSIMPQKKNADIAELVRGKTGRVYGNLMNLLTIMKGLPLSYNRDMQEDKPPLFDTAETTASSLSVFRRMIEKTWLNEERLARLTAEDLSLATEIAEYLVKKQIPFRDAHRITGKIVAYAIEQGKTLPTISLDEYRTFSEAFDEGIYDDLKPDASVNSKKTAGSCSFKSVEEQIARAKAAR.

The protein belongs to the lyase 1 family. Argininosuccinate lyase subfamily.

It localises to the cytoplasm. The enzyme catalyses 2-(N(omega)-L-arginino)succinate = fumarate + L-arginine. Its pathway is amino-acid biosynthesis; L-arginine biosynthesis; L-arginine from L-ornithine and carbamoyl phosphate: step 3/3. This Chlorobaculum tepidum (strain ATCC 49652 / DSM 12025 / NBRC 103806 / TLS) (Chlorobium tepidum) protein is Argininosuccinate lyase.